The primary structure comprises 86 residues: Curamycin polyketide synthase acyl carrier protein (86 aa).

Residues 7 to 86 (QVTVEELATL…VVNGALASGA (80 aa)) enclose the Carrier domain. Serine 44 carries the post-translational modification O-(pantetheine 4'-phosphoryl)serine.

Post-translationally, 4'-phosphopantetheine is transferred from CoA to a specific serine of the apo-ACP-like protein.

It participates in antibiotic biosynthesis; curamycin biosynthesis. Its function is as follows. Acyl carrier protein. In Streptomyces cyaneus (Streptomyces curacoi), this protein is Curamycin polyketide synthase acyl carrier protein (curE).